A 1486-amino-acid polypeptide reads, in one-letter code: Chromosome partition protein MukB (1486 aa).

34-41 (GGNGAGKS) lines the ATP pocket. 3 coiled-coil regions span residues 326–418 (LEAD…QYNQ), 444–480 (LETF…QAYQ), and 509–603 (RHLA…RAPV). The flexible hinge stretch occupies residues 666 to 783 (PGGSEDQRLN…EVPLFGRAAR (118 aa)). Coiled-coil stretches lie at residues 835-923 (EAEI…AKLE), 977-1115 (EMLS…TAKA), and 1209-1266 (VEAI…QNVS).

Belongs to the SMC family. MukB subfamily. In terms of assembly, homodimerization via its hinge domain. Binds to DNA via its C-terminal region. Interacts, and probably forms a ternary complex, with MukE and MukF via its C-terminal region. The complex formation is stimulated by calcium or magnesium. Interacts with tubulin-related protein FtsZ.

It is found in the cytoplasm. Its subcellular location is the nucleoid. In terms of biological role, plays a central role in chromosome condensation, segregation and cell cycle progression. Functions as a homodimer, which is essential for chromosome partition. Involved in negative DNA supercoiling in vivo, and by this means organize and compact chromosomes. May achieve or facilitate chromosome segregation by condensation DNA from both sides of a centrally located replisome during cell division. The protein is Chromosome partition protein MukB of Escherichia coli O157:H7.